Here is a 280-residue protein sequence, read N- to C-terminus: uncharacterized protein (280 aa).

The next 6 helical transmembrane spans lie at 46–66, 81–101, 114–134, 137–157, 170–190, and 225–245; these read LIFLLALPFLTLPFDSYFVCT, IACSYFVFPLISYQIWCFLIP, FFYLSGSCFFLFLFLTFSWVV, VWHFLYFVGATSTNSLMIKLQ, ILFISSVCSQVPVIVICLLEL, and IVACFLISLIIELAIFVALIV. The interval 258 to 280 is disordered; sequence ESGSIEKKNKSSPPPRTWQSNYQ.

The protein belongs to the TatC family.

Its subcellular location is the mitochondrion membrane. This is an uncharacterized protein from Arabidopsis thaliana (Mouse-ear cress).